The chain runs to 519 residues: Methionine--tRNA ligase (519 aa).

A 'HIGH' region motif is present at residues 11-21 (AYPNAAPHVGH). The 'KMSKS' region signature appears at 299–303 (KMSKS). Lys-302 serves as a coordination point for ATP. The interval 500-519 (LPPPTGVFPRYQPPQPPEGK) is disordered.

It belongs to the class-I aminoacyl-tRNA synthetase family. MetG type 2B subfamily. In terms of assembly, monomer.

The protein resides in the cytoplasm. The catalysed reaction is tRNA(Met) + L-methionine + ATP = L-methionyl-tRNA(Met) + AMP + diphosphate. In terms of biological role, is required not only for elongation of protein synthesis but also for the initiation of all mRNA translation through initiator tRNA(fMet) aminoacylation. This chain is Methionine--tRNA ligase (metG), found in Mycobacterium tuberculosis (strain CDC 1551 / Oshkosh).